The primary structure comprises 520 residues: Peptide chain release factor 3 (520 aa).

The tr-type G domain maps to 8-273 (EIRKTFAIIS…AYVDHAPMPS (266 aa)). GTP is bound by residues 17–24 (SHPDAGKT), 85–89 (DTPGH), and 139–142 (NKLD).

This sequence belongs to the TRAFAC class translation factor GTPase superfamily. Classic translation factor GTPase family. PrfC subfamily.

The protein localises to the cytoplasm. Its function is as follows. Increases the formation of ribosomal termination complexes and stimulates activities of RF-1 and RF-2. It binds guanine nucleotides and has strong preference for UGA stop codons. It may interact directly with the ribosome. The stimulation of RF-1 and RF-2 is significantly reduced by GTP and GDP, but not by GMP. The polypeptide is Peptide chain release factor 3 (Macrococcus caseolyticus (strain JCSC5402) (Macrococcoides caseolyticum)).